The primary structure comprises 872 residues: Homeobox-leucine zipper protein ROC6 (872 aa).

Disordered regions lie at residues 28–53 (VHNS…GLSL) and 67–130 (NRSL…HRHT). A compositionally biased stretch (gly residues) spans 74 to 85 (GNGGSGSGGDGD). The segment covering 86 to 99 (SLGRGREEENDSRS) has biased composition (basic and acidic residues). The segment covering 119–130 (PRKKKKRYHRHT) has biased composition (basic residues). Residues 122–181 (KKKRYHRHTPQQIQELEAVFKECPHPDEKQRMELSRRLNLESRQVKFWFQNRRTQMKQTQ) constitute a DNA-binding region (homeobox). Positions 176–248 (QMKQTQIERH…LKDELDRVCA (73 aa)) form a coiled coil. An START domain is found at 340–583 (GAIDRAVLLE…LQRQCQYLAI (244 aa)). Residues 792–818 (HNNGASPSPAEVGSGASPNSAAGGGGG) form a disordered region.

Belongs to the HD-ZIP homeobox family. Class IV subfamily.

The protein resides in the nucleus. In terms of biological role, probable transcription factor. In Oryza sativa subsp. japonica (Rice), this protein is Homeobox-leucine zipper protein ROC6 (ROC6).